A 269-amino-acid polypeptide reads, in one-letter code: Shikimate dehydrogenase (NADP(+)) (269 aa).

Residues 14–16 and Thr61 contribute to the shikimate site; that span reads SVS. The active-site Proton acceptor is Lys65. The shikimate site is built by Asn85 and Asp98. Residues 120–124, 143–148, and Thr211 contribute to the NADP(+) site; these read GAGGA and NRTEEK. Tyr213 lines the shikimate pocket. Gly234 lines the NADP(+) pocket.

This sequence belongs to the shikimate dehydrogenase family. In terms of assembly, homodimer.

The enzyme catalyses shikimate + NADP(+) = 3-dehydroshikimate + NADPH + H(+). The protein operates within metabolic intermediate biosynthesis; chorismate biosynthesis; chorismate from D-erythrose 4-phosphate and phosphoenolpyruvate: step 4/7. Functionally, involved in the biosynthesis of the chorismate, which leads to the biosynthesis of aromatic amino acids. Catalyzes the reversible NADPH linked reduction of 3-dehydroshikimate (DHSA) to yield shikimate (SA). The protein is Shikimate dehydrogenase (NADP(+)) of Archaeoglobus fulgidus (strain ATCC 49558 / DSM 4304 / JCM 9628 / NBRC 100126 / VC-16).